The sequence spans 917 residues: GTPase-activating Rap/Ran-GAP domain-like protein 3 (917 aa).

One can recognise a Rap-GAP domain in the interval 185–401 (LLVLEEQEGS…RTLDMLIRSL (217 aa)). The 310-residue stretch at 483–792 (PHEVVCADSW…QLVASRSDIY (310 aa)) folds into the CNH domain.

This sequence belongs to the GARNL3 family.

This chain is GTPase-activating Rap/Ran-GAP domain-like protein 3 (GARNL3), found in Gallus gallus (Chicken).